The chain runs to 1348 residues: Vascular endothelial growth factor receptor 2 (1348 aa).

Positions 1–20 are cleaved as a signal peptide; that stretch reads MELGPLRVLTVLLCLAPVFA. Residues 21-756 are Extracellular-facing; that stretch reads GLFISMDQPT…GAEEKTNLEL (736 aa). 20 N-linked (GlcNAc...) asparagine glycosylation sites follow: N43, N47, N63, N93, N138, N153, N201, N240, N290, N310, N365, N386, N513, N556, N603, N613, N622, N666, N688, and N710. Ig-like C2-type domains lie at 43-106, 138-202, 220-312, 320-405, 412-534, 540-651, and 658-744; these read NDTL…GDSQ, NKTV…IDNE, DLTM…KNSS, PFIH…HTFT, PQIG…RVIS, GLEI…KHLT, and PRLV…AFFS. C50 and C100 are disulfide-bonded. C145 and C195 are joined by a disulfide. A disulfide bridge links C241 with C299. C436 and C520 are disulfide-bonded. A disulfide bridge links C561 with C633. A disulfide bridge connects residues C679 and C728. A helical transmembrane segment spans residues 757 to 777; it reads IILVGTAVIAMFFWLLLVIIL. The Cytoplasmic segment spans residues 778 to 1348; that stretch reads RTVKRANGGD…SPAPVASLPL (571 aa). The 331-residue stretch at 825–1155 folds into the Protein kinase domain; that stretch reads LKLGKPLGRG…FSELVEHLGN (331 aa). ATP-binding positions include 831–839 and K859; that span reads LGRGAFGQV. The segment covering 958–967 has biased composition (low complexity); it reads ITSSQSSTSS. The segment at 958 to 983 is disordered; it reads ITSSQSSTSSGFVEERSLSDVEEEDA. D1021 functions as the Proton acceptor in the catalytic mechanism. Y1047, Y1052, Y1168, and Y1207 each carry phosphotyrosine; by autocatalysis. The disordered stretch occupies residues 1280-1302; that stretch reads PSKSNESVMSEASNQTSGYQSGY.

It belongs to the protein kinase superfamily. Tyr protein kinase family. CSF-1/PDGF receptor subfamily. Post-translationally, autophosphorylated on tyrosine residues upon ligand binding. Autophosphorylation occurs in trans, i.e. one subunit of the dimeric receptor phosphorylates tyrosine residues on the other subunit. In all endothelial tissues during onset of vascularization. In later development, present in lung, heart, intestine and skin.

It is found in the cell membrane. The protein localises to the cytoplasmic vesicle. It localises to the early endosome. The protein resides in the cell junction. Its subcellular location is the endoplasmic reticulum. It carries out the reaction L-tyrosyl-[protein] + ATP = O-phospho-L-tyrosyl-[protein] + ADP + H(+). Present in an inactive conformation in the absence of bound ligand. Binding of VEGFA, VEGFC or VEGFD leads to dimerization and activation by autophosphorylation on tyrosine residues. In terms of biological role, tyrosine-protein kinase that acts as a cell-surface receptor for VEGFA, VEGFC and/or VEGFD and plays an essential role in the regulation of angiogenesis and vascular development. Promotes proliferation, survival, migration and differentiation of endothelial cells. Promotes reorganization of the actin cytoskeleton. Binding of vascular growth factors leads to the activation of several signaling cascades. Activation of PLCG1 leads to the production of the cellular signaling molecules diacylglycerol and inositol 1,4,5-trisphosphate and the activation of protein kinase C. Mediates activation of MAPK1/ERK2, MAPK3/ERK1 and the MAP kinase signaling pathway, as well as of the AKT1 signaling pathway. Mediates phosphorylation of PIK3R1, the regulatory subunit of phosphatidylinositol 3-kinase, reorganization of the actin cytoskeleton and activation of PTK2/FAK1. Required for VEGFA-mediated induction of NOS2 and NOS3, leading to the production of the signaling molecule nitric oxide (NO) by endothelial cells. The sequence is that of Vascular endothelial growth factor receptor 2 from Coturnix japonica (Japanese quail).